Consider the following 278-residue polypeptide: Shikimate dehydrogenase (NADP(+)) (278 aa).

Residues 19 to 21 (SRS) and threonine 66 contribute to the shikimate site. Catalysis depends on lysine 70, which acts as the Proton acceptor. The shikimate site is built by asparagine 91 and aspartate 106. Residues 129–133 (GAGGA) and phenylalanine 221 contribute to the NADP(+) site. Position 223 (tyrosine 223) interacts with shikimate. Glycine 242 contributes to the NADP(+) binding site.

The protein belongs to the shikimate dehydrogenase family. As to quaternary structure, homodimer.

The catalysed reaction is shikimate + NADP(+) = 3-dehydroshikimate + NADPH + H(+). It participates in metabolic intermediate biosynthesis; chorismate biosynthesis; chorismate from D-erythrose 4-phosphate and phosphoenolpyruvate: step 4/7. Its function is as follows. Involved in the biosynthesis of the chorismate, which leads to the biosynthesis of aromatic amino acids. Catalyzes the reversible NADPH linked reduction of 3-dehydroshikimate (DHSA) to yield shikimate (SA). The sequence is that of Shikimate dehydrogenase (NADP(+)) from Anaeromyxobacter dehalogenans (strain 2CP-C).